A 156-amino-acid chain; its full sequence is 3-hydroxyacyl-[acyl-carrier-protein] dehydratase FabZ (156 aa).

His-62 is an active-site residue.

This sequence belongs to the thioester dehydratase family. FabZ subfamily.

It localises to the cytoplasm. The catalysed reaction is a (3R)-hydroxyacyl-[ACP] = a (2E)-enoyl-[ACP] + H2O. Functionally, involved in unsaturated fatty acids biosynthesis. Catalyzes the dehydration of short chain beta-hydroxyacyl-ACPs and long chain saturated and unsaturated beta-hydroxyacyl-ACPs. The protein is 3-hydroxyacyl-[acyl-carrier-protein] dehydratase FabZ of Parasynechococcus marenigrum (strain WH8102).